We begin with the raw amino-acid sequence, 690 residues long: Elongation factor G (690 aa).

A tr-type G domain is found at 8–283; the sequence is EKYRNIGIMA…AVVDYLPSPL (276 aa). GTP contacts are provided by residues 17 to 24, 81 to 85, and 135 to 138; these read AHIDAGKT, DTPGH, and NKLD.

This sequence belongs to the TRAFAC class translation factor GTPase superfamily. Classic translation factor GTPase family. EF-G/EF-2 subfamily.

The protein resides in the cytoplasm. Functionally, catalyzes the GTP-dependent ribosomal translocation step during translation elongation. During this step, the ribosome changes from the pre-translocational (PRE) to the post-translocational (POST) state as the newly formed A-site-bound peptidyl-tRNA and P-site-bound deacylated tRNA move to the P and E sites, respectively. Catalyzes the coordinated movement of the two tRNA molecules, the mRNA and conformational changes in the ribosome. The sequence is that of Elongation factor G from Rhizorhabdus wittichii (strain DSM 6014 / CCUG 31198 / JCM 15750 / NBRC 105917 / EY 4224 / RW1) (Sphingomonas wittichii).